We begin with the raw amino-acid sequence, 78 residues long: Magnetosome protein MamL (78 aa).

The first 22 residues, 1-22 (MVRVIGSLVFGGLILLLASSNA), serve as a signal peptide directing secretion. Over 23-38 (HMVETRFGPLIMLAPH) the chain is Lumenal. A helical transmembrane segment spans residues 39 to 59 (FVVLGITFFLGFAIGIVLVFA). The Cytoplasmic segment spans residues 60–78 (NVMKRRKHKLPGKNIVIKR).

Belongs to the magnetosome MamL family.

It localises to the magnetosome membrane. Its function is as follows. Involved in magnetite crystal maturation, but not in magnetosome vesicle tubulation or formation. One of 7 genes (mamLQBIEMO) able to induce magnetosome membrane biogenesis; coexpression of mamLQRBIEMO in a deletion of the 17 gene mamAB operon restores magnetosome vesicle formation but not magnetite biosynthesis. In Magnetospirillum gryphiswaldense (strain DSM 6361 / JCM 21280 / NBRC 15271 / MSR-1), this protein is Magnetosome protein MamL.